The sequence spans 371 residues: Lombricine kinase (371 aa).

The Phosphagen kinase N-terminal domain occupies 1-86 (MPKFTARQNF…FDAVINEKHG (86 aa)). The Phosphagen kinase C-terminal domain maps to 113–355 (YVKSARIRTG…GKLIEYEKLL (243 aa)). Residues 116–120 (SARIR), His179, Arg224, Arg280, 308–313 (RGTGGE), and Asp323 each bind ATP.

The protein belongs to the ATP:guanido phosphotransferase family. Homodimer.

The catalysed reaction is L-lombricine + ATP = N-phospho-L-lombricine + ADP + H(+). The sequence is that of Lombricine kinase from Eisenia fetida (Red wiggler worm).